Reading from the N-terminus, the 333-residue chain is 3-isopropylmalate/3-methylmalate dehydrogenase (333 aa).

Substrate contacts are provided by R81, R91, R112, and D203. D203, D227, and D231 together coordinate Mg(2+). 260 to 272 (GSAPDIAGKKIAN) lines the NAD(+) pocket.

It belongs to the isocitrate and isopropylmalate dehydrogenases family. In terms of assembly, homotetramer. Mg(2+) is required as a cofactor. Requires Mn(2+) as cofactor.

It localises to the cytoplasm. It carries out the reaction (2R,3S)-3-isopropylmalate + NAD(+) = 4-methyl-2-oxopentanoate + CO2 + NADH. The catalysed reaction is (2R,3S)-3-methylmalate + NAD(+) = 2-oxobutanoate + CO2 + NADH. It catalyses the reaction (R)-malate + NAD(+) = pyruvate + CO2 + NADH. The protein operates within amino-acid biosynthesis; L-leucine biosynthesis; L-leucine from 3-methyl-2-oxobutanoate: step 3/4. Its pathway is amino-acid biosynthesis; L-isoleucine biosynthesis; 2-oxobutanoate from pyruvate: step 3/3. Functionally, catalyzes the oxidation of 3-carboxy-2-hydroxy-4-methylpentanoate (3-isopropylmalate) to 3-carboxy-4-methyl-2-oxopentanoate, which decarboxylates to 4-methyl-2-oxopentanoate (2-oxoisocaproate). Also catalyzes the oxidative decarboxylation of 3-methylmalate to 2-oxobutyrate, and that of D-malate to pyruvate. Cannot use NADP(+) instead of NAD(+). Cannot catalyze the oxidation of L-malate, L-tartrate, D-tartrate, DL-isocitrate, or DL-lactate. The chain is 3-isopropylmalate/3-methylmalate dehydrogenase (leuB) from Methanocaldococcus jannaschii (strain ATCC 43067 / DSM 2661 / JAL-1 / JCM 10045 / NBRC 100440) (Methanococcus jannaschii).